The following is a 468-amino-acid chain: Mitochondrial dynamics protein MID51 (468 aa).

Topologically, residues 1 to 29 are mitochondrial intermembrane; it reads MAGVNGDRKGKKDDNGLGTAIDFVLSNAK. The chain crosses the membrane as a helical span at residues 30–47; that stretch reads LVLGVGGAAMLGIATLAV. Topologically, residues 48-468 are cytoplasmic; sequence KRMYDRALSA…SDPESLLRTV (421 aa). Residues 50-196 are dimerization; that stretch reads MYDRALSAPS…LSGSLYDDLQ (147 aa). Positions 56–123 are disordered; sequence SAPSSPTKAD…RGLARGGRPA (68 aa). A compositionally biased stretch (polar residues) spans 91–108; the sequence is QNVSRSLQTLPTSSSSFK. The important for interaction with DNM1L stretch occupies residues 161-170; sequence AALDICAELR. Positions 188, 190, and 202 each coordinate ADP. The important for interaction with DNM1L stretch occupies residues 235 to 244; the sequence is RRENLEYFPR. ADP is bound by residues Ser-344, Arg-346, and Lys-372.

It belongs to the MID49/MID51 family. As to quaternary structure, homodimer.

The protein localises to the mitochondrion outer membrane. Its function is as follows. Mitochondrial outer membrane protein which regulates mitochondrial fission/fusion dynamics. Promotes the recruitment and association of the fission mediator dynamin-related protein 1 (DNM1L) to the mitochondrial surface independently of the mitochondrial fission FIS1 and MFF proteins. Regulates DNM1L GTPase activity and DNM1L oligomerization. The protein is Mitochondrial dynamics protein MID51 (mief1) of Danio rerio (Zebrafish).